Here is a 505-residue protein sequence, read N- to C-terminus: ATP synthase subunit alpha, chloroplastic (505 aa).

Position 172–179 (172–179 (GDRQTGKT)) interacts with ATP.

This sequence belongs to the ATPase alpha/beta chains family. In terms of assembly, F-type ATPases have 2 components, CF(1) - the catalytic core - and CF(0) - the membrane proton channel. CF(1) has five subunits: alpha(3), beta(3), gamma(1), delta(1), epsilon(1). CF(0) has four main subunits: a, b, b' and c.

Its subcellular location is the plastid. The protein localises to the chloroplast thylakoid membrane. It carries out the reaction ATP + H2O + 4 H(+)(in) = ADP + phosphate + 5 H(+)(out). In terms of biological role, produces ATP from ADP in the presence of a proton gradient across the membrane. The alpha chain is a regulatory subunit. The protein is ATP synthase subunit alpha, chloroplastic of Antithamnion sp. (Red alga).